Consider the following 456-residue polypeptide: Exodeoxyribonuclease 7 large subunit (456 aa).

It belongs to the XseA family. In terms of assembly, heterooligomer composed of large and small subunits.

Its subcellular location is the cytoplasm. It carries out the reaction Exonucleolytic cleavage in either 5'- to 3'- or 3'- to 5'-direction to yield nucleoside 5'-phosphates.. In terms of biological role, bidirectionally degrades single-stranded DNA into large acid-insoluble oligonucleotides, which are then degraded further into small acid-soluble oligonucleotides. The chain is Exodeoxyribonuclease 7 large subunit from Escherichia coli O157:H7.